Reading from the N-terminus, the 715-residue chain is Polyribonucleotide nucleotidyltransferase (715 aa).

Residues Asp493 and Asp499 each contribute to the Mg(2+) site. Residues Pro560–Ile619 enclose the KH domain. Residues Gly629–Lys697 form the S1 motif domain.

This sequence belongs to the polyribonucleotide nucleotidyltransferase family. It depends on Mg(2+) as a cofactor.

The protein localises to the cytoplasm. The catalysed reaction is RNA(n+1) + phosphate = RNA(n) + a ribonucleoside 5'-diphosphate. Involved in mRNA degradation. Catalyzes the phosphorolysis of single-stranded polyribonucleotides processively in the 3'- to 5'-direction. This is Polyribonucleotide nucleotidyltransferase from Burkholderia cenocepacia (strain HI2424).